Here is a 440-residue protein sequence, read N- to C-terminus: Xaa-Pro dipeptidase (440 aa).

5 residues coordinate Mn(2+): Asp-244, Asp-255, His-335, Glu-380, and Glu-419.

This sequence belongs to the peptidase M24B family. Bacterial-type prolidase subfamily. Mn(2+) is required as a cofactor.

It carries out the reaction Xaa-L-Pro dipeptide + H2O = an L-alpha-amino acid + L-proline. Functionally, splits dipeptides with a prolyl residue in the C-terminal position. In Shewanella pealeana (strain ATCC 700345 / ANG-SQ1), this protein is Xaa-Pro dipeptidase.